The following is a 340-amino-acid chain: L-threonine 3-dehydrogenase (340 aa).

Cys38 is a binding site for Zn(2+). Catalysis depends on charge relay system residues Thr40 and His43. Zn(2+) is bound by residues His63, Glu64, Cys93, Cys96, Cys99, and Cys107. NAD(+) is bound by residues Ile175, Asp195, Arg200, 261–263, and 285–286; these read LGI and IY.

This sequence belongs to the zinc-containing alcohol dehydrogenase family. As to quaternary structure, homotetramer. It depends on Zn(2+) as a cofactor.

The protein localises to the cytoplasm. It carries out the reaction L-threonine + NAD(+) = (2S)-2-amino-3-oxobutanoate + NADH + H(+). The protein operates within amino-acid degradation; L-threonine degradation via oxydo-reductase pathway; glycine from L-threonine: step 1/2. In terms of biological role, catalyzes the NAD(+)-dependent oxidation of L-threonine to 2-amino-3-ketobutyrate. The protein is L-threonine 3-dehydrogenase of Xanthomonas oryzae pv. oryzae (strain MAFF 311018).